A 551-amino-acid chain; its full sequence is RCC1 and BTB domain-containing protein 2 (551 aa).

6 RCC1 repeats span residues 64-115, 117-169, 171-222, 223-274, 276-326, and 328-382; these read NDEI…VLAT, DGEV…VLTS, GEVF…AVVD, TGEV…VLTD, GQIY…AAKS, and GGHV…TVAE. Residues 394-457 form the BTB domain; that stretch reads ADLKFLVDGK…LYTDNISLPP (64 aa).

It localises to the cytoplasmic vesicle. The protein resides in the secretory vesicle. Its subcellular location is the acrosome. The protein is RCC1 and BTB domain-containing protein 2 (Rcbtb2) of Rattus norvegicus (Rat).